The sequence spans 365 residues: tRNA N6-adenosine threonylcarbamoyltransferase (365 aa).

Residues His119 and His123 each contribute to the Fe cation site. Substrate contacts are provided by residues 141–145 (LVSGG), Asp174, and Gly187. The segment at 184 to 203 (QPGGPSVEGEARQGDPKRFR) is disordered. The span at 192 to 201 (GEARQGDPKR) shows a compositional bias: basic and acidic residues. Asn289 is a binding site for substrate. Residue Asp317 participates in Fe cation binding. Residues 342 to 365 (ARPRWPLDQSSPAMLGSGKKGAKA) form a disordered region.

Belongs to the KAE1 / TsaD family. It depends on Fe(2+) as a cofactor.

It is found in the cytoplasm. It catalyses the reaction L-threonylcarbamoyladenylate + adenosine(37) in tRNA = N(6)-L-threonylcarbamoyladenosine(37) in tRNA + AMP + H(+). Functionally, required for the formation of a threonylcarbamoyl group on adenosine at position 37 (t(6)A37) in tRNAs that read codons beginning with adenine. Is involved in the transfer of the threonylcarbamoyl moiety of threonylcarbamoyl-AMP (TC-AMP) to the N6 group of A37, together with TsaE and TsaB. TsaD likely plays a direct catalytic role in this reaction. The protein is tRNA N6-adenosine threonylcarbamoyltransferase of Ruegeria pomeroyi (strain ATCC 700808 / DSM 15171 / DSS-3) (Silicibacter pomeroyi).